The following is a 414-amino-acid chain: Carboxynorspermidine synthase (414 aa).

Belongs to the saccharopine dehydrogenase family. Carboxynorspermidine synthase subfamily.

It carries out the reaction carboxynorspermidine + NADP(+) + H2O = L-aspartate 4-semialdehyde + propane-1,3-diamine + NADPH + H(+). The enzyme catalyses carboxyspermidine + NADP(+) + H2O = L-aspartate 4-semialdehyde + putrescine + NADPH + H(+). Its function is as follows. Involved in norspermidine biosynthesis. Catalyzes the synthesis of carboxynorspermidine from L-aspartate 4-semialdehyde and 1,3-diaminopropane. Is also active with putrescine as a substrate. Essential for biofilm formation. This chain is Carboxynorspermidine synthase, found in Vibrio cholerae serotype O1 (strain ATCC 39315 / El Tor Inaba N16961).